We begin with the raw amino-acid sequence, 380 residues long: MDVLNLFNETIKVGAFNATQLVEAYVISIFSLTTFVGLAITLYLGIAYLYKKPADQVVGLVCCDVLIVNAVCLITLPLWVYQAATKKWFGGEFMCKFAGMFYTMNVYMSVWSCVIVTFDRWYCMMCKNLQAVTVLGRTIRTNQVVTILTLLVTFIGLFSLTETSIVDKKCYLYSGDSLLSFVNAALGYTVPWLAIAIMIVHIILRTSRLDYDPKWLNTNILMWMMFTLLVTQGPYYSLSAYMGNFKSFVEKNMTHHSNKVTASYFHGDASHSIQVAMLVCTHALAITRMFSVPLILSTLAGYEPLYVWKRITRCCCMRVEYENLEDESQSKLLRGEENPNYDYSPKSVRIKPLKSPGGGDNSSLKDEGYDEESQNGFSIG.

The next 7 membrane-spanning stretches (helical) occupy residues 26 to 46 (VISI…YLGI), 60 to 80 (LVCC…PLWV), 97 to 117 (FAGM…VIVT), 145 to 165 (VTIL…ETSI), 184 to 204 (AALG…HIIL), 220 to 240 (ILMW…SLSA), and 275 to 295 (VAML…VPLI). Cysteine 95 and cysteine 170 form a disulfide bridge. The disordered stretch occupies residues 328–380 (SQSKLLRGEENPNYDYSPKSVRIKPLKSPGGGDNSSLKDEGYDEESQNGFSIG).

The protein belongs to the G-protein coupled receptor 1 family.

The protein resides in the host membrane. This chain is G-protein coupled receptor, found in Elephas maximus (Indian elephant).